A 405-amino-acid polypeptide reads, in one-letter code: Threonine synthase (405 aa).

The residue at position 106 (Lys-106) is an N6-(pyridoxal phosphate)lysine. Pyridoxal 5'-phosphate contacts are provided by residues Asn-132, 233–237 (GNAGN), and Thr-371.

The protein belongs to the threonine synthase family. The cofactor is pyridoxal 5'-phosphate.

It catalyses the reaction O-phospho-L-homoserine + H2O = L-threonine + phosphate. The protein operates within amino-acid biosynthesis; L-threonine biosynthesis; L-threonine from L-aspartate: step 5/5. Catalyzes the gamma-elimination of phosphate from L-phosphohomoserine and the beta-addition of water to produce L-threonine. This chain is Threonine synthase (thrC), found in Methanocaldococcus jannaschii (strain ATCC 43067 / DSM 2661 / JAL-1 / JCM 10045 / NBRC 100440) (Methanococcus jannaschii).